The chain runs to 274 residues: 2,3,4,5-tetrahydropyridine-2,6-dicarboxylate N-succinyltransferase (274 aa).

Residues arginine 104 and aspartate 141 each contribute to the substrate site.

Belongs to the transferase hexapeptide repeat family. Homotrimer.

It localises to the cytoplasm. It catalyses the reaction (S)-2,3,4,5-tetrahydrodipicolinate + succinyl-CoA + H2O = (S)-2-succinylamino-6-oxoheptanedioate + CoA. Its pathway is amino-acid biosynthesis; L-lysine biosynthesis via DAP pathway; LL-2,6-diaminopimelate from (S)-tetrahydrodipicolinate (succinylase route): step 1/3. The sequence is that of 2,3,4,5-tetrahydropyridine-2,6-dicarboxylate N-succinyltransferase from Escherichia coli O6:H1 (strain CFT073 / ATCC 700928 / UPEC).